We begin with the raw amino-acid sequence, 101 residues long: NADH-quinone oxidoreductase subunit K (101 aa).

Helical transmembrane passes span 4–24 (LSHY…GIFI), 29–49 (IIVI…NLVA), and 65–85 (FVLT…VVFF).

The protein belongs to the complex I subunit 4L family. In terms of assembly, NDH-1 is composed of 14 different subunits. Subunits NuoA, H, J, K, L, M, N constitute the membrane sector of the complex.

It is found in the cell inner membrane. It carries out the reaction a quinone + NADH + 5 H(+)(in) = a quinol + NAD(+) + 4 H(+)(out). NDH-1 shuttles electrons from NADH, via FMN and iron-sulfur (Fe-S) centers, to quinones in the respiratory chain. The immediate electron acceptor for the enzyme in this species is believed to be ubiquinone. Couples the redox reaction to proton translocation (for every two electrons transferred, four hydrogen ions are translocated across the cytoplasmic membrane), and thus conserves the redox energy in a proton gradient. This chain is NADH-quinone oxidoreductase subunit K, found in Methylobacterium nodulans (strain LMG 21967 / CNCM I-2342 / ORS 2060).